Reading from the N-terminus, the 222-residue chain is Phosphatidylinositol phosphate synthase (222 aa).

Position 31-34 (31-34 (DIVT)) interacts with a CDP-1,2-diacyl-sn-glycerol. The next 2 helical transmembrane spans lie at 32 to 49 (IVTL…LTLF) and 55 to 74 (WWGA…DGAM). Mg(2+)-binding residues include D68 and D71. Positions 72, 76, and 82 each coordinate a CDP-1,2-diacyl-sn-glycerol. Mg(2+)-binding residues include D89 and D93. The Proton acceptor role is filled by D93. Transmembrane regions (helical) follow at residues 95-112 (LGDG…AFGL), 118-136 (VVAT…YIKA), 156-173 (LVIV…FFPL), and 179-196 (VAMW…LQRV).

Belongs to the CDP-alcohol phosphatidyltransferase class-I family. As to quaternary structure, homodimer. Mg(2+) serves as cofactor.

It localises to the cell membrane. It is found in the secreted. Its subcellular location is the cell wall. The catalysed reaction is a CDP-1,2-diacyl-sn-glycerol + 1D-myo-inositol 3-phosphate = a 1,2-diacyl-sn-glycero-3-phospho-(1D-myo-inositol-3-phosphate) + CMP + H(+). It catalyses the reaction 1,2-di-(9Z-octadecenoyl)-sn-glycero-3-cytidine-5'-diphosphate + 1D-myo-inositol 3-phosphate = 1,2-di-(9Z-octadecenoyl)-sn-glycero-3-phospho-(1D-myo-inositol-3-phosphate) + CMP + H(+). It carries out the reaction 1,2-dihexadecanoyl-sn-glycero-3-CDP + 1D-myo-inositol 3-phosphate = 1,2-dihexadecanoyl-sn-glycero-3-phospho-(1D-myo-inositol-3-phosphate) + CMP + H(+). It participates in phospholipid metabolism; phosphatidylinositol phosphate biosynthesis. Its activity is regulated as follows. Competitively inhibited by several inositol 1-phosphate analogs, including the phosphonate analog 1-deoxy-1-phosphonomethyl-myo-inositol (Ino-C-P). This leads to inhibition of M.smegmatis growth. In terms of biological role, catalyzes the conjugation of the 1'-hydroxyl group of D-myo-inositol-3-phosphate (also named L-myo-inositol-1-phosphate) with a lipid tail of cytidine diphosphate diacylglycerol (CDP-DAG), forming phosphatidylinositol phosphate (PIP) and CMP. PIP is a precursor of phosphatidylinositol (PI) which is an essential lipid for mycobacteria required for formation of their cell wall. Is essential to the survival of M.smegmatis. The chain is Phosphatidylinositol phosphate synthase from Mycolicibacterium smegmatis (strain ATCC 700084 / mc(2)155) (Mycobacterium smegmatis).